The sequence spans 388 residues: Ferrochelatase (388 aa).

Fe cation is bound by residues H197 and E278.

Belongs to the ferrochelatase family.

It localises to the cytoplasm. It carries out the reaction heme b + 2 H(+) = protoporphyrin IX + Fe(2+). The protein operates within porphyrin-containing compound metabolism; protoheme biosynthesis; protoheme from protoporphyrin-IX: step 1/1. Catalyzes the ferrous insertion into protoporphyrin IX. The chain is Ferrochelatase from Thermosynechococcus vestitus (strain NIES-2133 / IAM M-273 / BP-1).